A 1346-amino-acid polypeptide reads, in one-letter code: G-protein coupled receptor-associated sorting protein 1 (1346 aa).

Disordered stretches follow at residues 1–101 (MTGA…FRGE), 144–177 (TESIPKKASSPARFQPSFGPEEGTSMGSWYRPRP), and 192–258 (ADKS…SAKT). Over residues 21–36 (ENANAAEVEPEVPLVV) the composition is skewed to low complexity. The segment covering 211–226 (FRPRKSMKSNTRFRHM) has biased composition (basic residues). A Phosphoserine modification is found at serine 295. 2 disordered regions span residues 311–399 (EEAK…RPEE) and 461–485 (VSSFCLGSGKKTSMESGPKATSKSM). Positions 316–333 (RSKPRARKGVNMRARHQA) are enriched in basic residues. Composition is skewed to basic and acidic residues over residues 347-361 (DKNKKDSWFLPEEKA) and 370-399 (KKEPRTRAMPREEVKTKARASTKQEARPEE). Polar residues predominate over residues 461-484 (VSSFCLGSGKKTSMESGPKATSKS). Serine 619 and serine 626 each carry phosphoserine. Threonine 860 is modified (phosphothreonine). Serine 862 bears the Phosphoserine mark. Residues 984–1004 (ACEPESSTEHEPDPSRRPQSW) are disordered. A compositionally biased stretch (basic and acidic residues) spans 990–1003 (STEHEPDPSRRPQS).

The protein belongs to the GPRASP family. As to quaternary structure, interacts with cytoplasmic tails of a variety of G-protein coupled receptors such as delta opioid receptor/OPRD1, beta-2 adrenergic receptor/ADRB2 and D4 dopamine receptor/DRD4. Interacts with BECN2; the interaction is direct and with D2 dopamine receptor/DRD2. Interacts with PER1. In terms of tissue distribution, expressed in the brain.

It localises to the cytoplasm. In terms of biological role, modulates lysosomal sorting and functional down-regulation of a variety of G-protein coupled receptors. Targets receptors for degradation in lysosomes via its interaction with BECN2. The sequence is that of G-protein coupled receptor-associated sorting protein 1 (Gprasp1) from Rattus norvegicus (Rat).